The following is a 135-amino-acid chain: Protein KRTCAP2 homolog (135 aa).

The next 4 helical transmembrane spans lie at 1-21 (MAVSSGTSGMLATCLFMLLFA), 35-55 (PMAIVGGFLGSVLFILILTAI), 69-89 (TKLIPEVVIALVIAMAASGMV), and 93-113 (CITTCLIFSIVALYYVSRISI).

The protein belongs to the KRTCAP2 family. In terms of assembly, component of the oligosaccharyltransferase (OST) complex.

It is found in the membrane. In terms of biological role, subunit of the oligosaccharyl transferase (OST) complex that catalyzes the initial transfer of a defined glycan (Glc(3)Man(9)GlcNAc(2) in eukaryotes) from the lipid carrier dolichol-pyrophosphate to an asparagine residue within an Asn-X-Ser/Thr consensus motif in nascent polypeptide chains, the first step in protein N-glycosylation. N-glycosylation occurs cotranslationally and the complex associates with the Sec61 complex at the channel-forming translocon complex that mediates protein translocation across the endoplasmic reticulum (ER). All subunits are required for a maximal enzyme activity. The sequence is that of Protein KRTCAP2 homolog from Ixodes scapularis (Black-legged tick).